Reading from the N-terminus, the 585-residue chain is Pyruvate kinase (585 aa).

Arg-32 lines the substrate pocket. Positions 34, 36, 66, and 67 each coordinate K(+). ATP is bound at residue 34 to 37 (NFSH). Residues Arg-73 and Lys-156 each contribute to the ATP site. Residue Glu-221 participates in Mg(2+) binding. Residues Gly-244, Asp-245, and Thr-277 each coordinate substrate. Residue Asp-245 participates in Mg(2+) binding.

It belongs to the pyruvate kinase family. This sequence in the C-terminal section; belongs to the PEP-utilizing enzyme family. Mg(2+) is required as a cofactor. Requires K(+) as cofactor.

It carries out the reaction pyruvate + ATP = phosphoenolpyruvate + ADP + H(+). The protein operates within carbohydrate degradation; glycolysis; pyruvate from D-glyceraldehyde 3-phosphate: step 5/5. This is Pyruvate kinase (pyk) from Staphylococcus aureus (strain MRSA252).